A 385-amino-acid polypeptide reads, in one-letter code: Acetylornithine aminotransferase (385 aa).

Residues 95-96 and Phe122 contribute to the pyridoxal 5'-phosphate site; that span reads GA. Arg125 contributes to the N(2)-acetyl-L-ornithine binding site. 208–211 is a pyridoxal 5'-phosphate binding site; sequence DEIQ. N6-(pyridoxal phosphate)lysine is present on Lys237. Residue Thr265 participates in N(2)-acetyl-L-ornithine binding. Thr266 contributes to the pyridoxal 5'-phosphate binding site.

It belongs to the class-III pyridoxal-phosphate-dependent aminotransferase family. ArgD subfamily. Homodimer. Pyridoxal 5'-phosphate serves as cofactor.

It is found in the cytoplasm. The catalysed reaction is N(2)-acetyl-L-ornithine + 2-oxoglutarate = N-acetyl-L-glutamate 5-semialdehyde + L-glutamate. Its pathway is amino-acid biosynthesis; L-arginine biosynthesis; N(2)-acetyl-L-ornithine from L-glutamate: step 4/4. The chain is Acetylornithine aminotransferase from Bacillus subtilis (strain 168).